Here is a 702-residue protein sequence, read N- to C-terminus: Ribosomal RNA large subunit methyltransferase K/L (702 aa).

A THUMP domain is found at 43 to 154 (LIYQSLMWSR…KETASIALDL (112 aa)).

This sequence belongs to the methyltransferase superfamily. RlmKL family.

Its subcellular location is the cytoplasm. It carries out the reaction guanosine(2445) in 23S rRNA + S-adenosyl-L-methionine = N(2)-methylguanosine(2445) in 23S rRNA + S-adenosyl-L-homocysteine + H(+). The catalysed reaction is guanosine(2069) in 23S rRNA + S-adenosyl-L-methionine = N(2)-methylguanosine(2069) in 23S rRNA + S-adenosyl-L-homocysteine + H(+). In terms of biological role, specifically methylates the guanine in position 2445 (m2G2445) and the guanine in position 2069 (m7G2069) of 23S rRNA. The polypeptide is Ribosomal RNA large subunit methyltransferase K/L (Salmonella schwarzengrund (strain CVM19633)).